A 293-amino-acid polypeptide reads, in one-letter code: Phosphatidylserine decarboxylase proenzyme (293 aa).

Active-site charge relay system; for autoendoproteolytic cleavage activity residues include Asp90, His147, and Ser254. Ser254 functions as the Schiff-base intermediate with substrate; via pyruvic acid; for decarboxylase activity in the catalytic mechanism. Ser254 bears the Pyruvic acid (Ser); by autocatalysis mark.

It belongs to the phosphatidylserine decarboxylase family. PSD-B subfamily. Prokaryotic type I sub-subfamily. In terms of assembly, heterodimer of a large membrane-associated beta subunit and a small pyruvoyl-containing alpha subunit. Pyruvate is required as a cofactor. Post-translationally, is synthesized initially as an inactive proenzyme. Formation of the active enzyme involves a self-maturation process in which the active site pyruvoyl group is generated from an internal serine residue via an autocatalytic post-translational modification. Two non-identical subunits are generated from the proenzyme in this reaction, and the pyruvate is formed at the N-terminus of the alpha chain, which is derived from the carboxyl end of the proenzyme. The autoendoproteolytic cleavage occurs by a canonical serine protease mechanism, in which the side chain hydroxyl group of the serine supplies its oxygen atom to form the C-terminus of the beta chain, while the remainder of the serine residue undergoes an oxidative deamination to produce ammonia and the pyruvoyl prosthetic group on the alpha chain. During this reaction, the Ser that is part of the protease active site of the proenzyme becomes the pyruvoyl prosthetic group, which constitutes an essential element of the active site of the mature decarboxylase.

Its subcellular location is the cell membrane. The catalysed reaction is a 1,2-diacyl-sn-glycero-3-phospho-L-serine + H(+) = a 1,2-diacyl-sn-glycero-3-phosphoethanolamine + CO2. The protein operates within phospholipid metabolism; phosphatidylethanolamine biosynthesis; phosphatidylethanolamine from CDP-diacylglycerol: step 2/2. Its function is as follows. Catalyzes the formation of phosphatidylethanolamine (PtdEtn) from phosphatidylserine (PtdSer). This Yersinia enterocolitica serotype O:8 / biotype 1B (strain NCTC 13174 / 8081) protein is Phosphatidylserine decarboxylase proenzyme.